The chain runs to 227 residues: Phosphoribosylformylglycinamidine synthase subunit PurQ (227 aa).

One can recognise a Glutamine amidotransferase type-1 domain in the interval 2 to 227 (RWAIVRFPGA…FLGLVREVAR (226 aa)). Residue Cys-85 is the Nucleophile of the active site. Residues His-200 and Glu-202 contribute to the active site.

In terms of assembly, part of the FGAM synthase complex composed of 1 PurL, 1 PurQ and 2 PurS subunits.

The protein resides in the cytoplasm. It carries out the reaction N(2)-formyl-N(1)-(5-phospho-beta-D-ribosyl)glycinamide + L-glutamine + ATP + H2O = 2-formamido-N(1)-(5-O-phospho-beta-D-ribosyl)acetamidine + L-glutamate + ADP + phosphate + H(+). The catalysed reaction is L-glutamine + H2O = L-glutamate + NH4(+). It functions in the pathway purine metabolism; IMP biosynthesis via de novo pathway; 5-amino-1-(5-phospho-D-ribosyl)imidazole from N(2)-formyl-N(1)-(5-phospho-D-ribosyl)glycinamide: step 1/2. Part of the phosphoribosylformylglycinamidine synthase complex involved in the purines biosynthetic pathway. Catalyzes the ATP-dependent conversion of formylglycinamide ribonucleotide (FGAR) and glutamine to yield formylglycinamidine ribonucleotide (FGAM) and glutamate. The FGAM synthase complex is composed of three subunits. PurQ produces an ammonia molecule by converting glutamine to glutamate. PurL transfers the ammonia molecule to FGAR to form FGAM in an ATP-dependent manner. PurS interacts with PurQ and PurL and is thought to assist in the transfer of the ammonia molecule from PurQ to PurL. This chain is Phosphoribosylformylglycinamidine synthase subunit PurQ, found in Thermus thermophilus (strain ATCC BAA-163 / DSM 7039 / HB27).